The primary structure comprises 121 residues: Basic phospholipase A2 CoaTx-II (121 aa).

Cystine bridges form between C26–C115, C28–C44, C43–C95, C49–C121, C50–C88, C57–C81, and C75–C86. Positions 105 to 117 (KKYRIYPKFLCKK) are important for membrane-damaging activities in eukaryotes and bacteria; heparin-binding.

The protein belongs to the phospholipase A2 family. Group II subfamily. K49 sub-subfamily. In terms of assembly, homodimer; non-covalently-linked. Expressed by the venom gland.

It is found in the secreted. Functionally, snake venom phospholipase A2 (PLA2) that lacks enzymatic inactivity. It shows antibacterial activity against both Gram-negative and Gram-positive bacteria, including methicillin-resistant strains. In vivo, it causes local muscular damage, but no systemic damage (intravenous administration does not elevate plasma creatine kinase). Also causes an inflammatory activity that is demonstrated by mice paw edema induction and pro-inflammatory cytokine IL-6 elevation. A model of myotoxic mechanism has been proposed: an apo Lys49-PLA2 is activated by the entrance of a hydrophobic molecule (e.g. fatty acid) at the hydrophobic channel of the protein leading to a reorientation of a monomer. This reorientation causes a transition between 'inactive' to 'active' states, causing alignment of C-terminal and membrane-docking sites (MDoS) side-by-side and putting the membrane-disruption sites (MDiS) in the same plane, exposed to solvent and in a symmetric position for both monomers. The MDoS region stabilizes the toxin on membrane by the interaction of charged residues with phospholipid head groups. Subsequently, the MDiS region destabilizes the membrane with penetration of hydrophobic residues. This insertion causes a disorganization of the membrane, allowing an uncontrolled influx of ions (i.e. calcium and sodium), and eventually triggering irreversible intracellular alterations and cell death. The chain is Basic phospholipase A2 CoaTx-II from Crotalus lutosus abyssus (Grand Canyon rattlesnake).